The primary structure comprises 125 residues: MADLKAFAEQLVNLTVKEVSELATILKEEYGIEPAAAAVAVAGPAAGGAAAAAEEKTSFDVVLKAAGANKLAIVKLVKELTGLGLKEAKDMVDSAPSAIKEGIAKADAEAMKKQLEEAGAEVELK.

Belongs to the bacterial ribosomal protein bL12 family. As to quaternary structure, homodimer. Part of the ribosomal stalk of the 50S ribosomal subunit. Forms a multimeric L10(L12)X complex, where L10 forms an elongated spine to which 2 to 4 L12 dimers bind in a sequential fashion. Binds GTP-bound translation factors.

In terms of biological role, forms part of the ribosomal stalk which helps the ribosome interact with GTP-bound translation factors. Is thus essential for accurate translation. The protein is Large ribosomal subunit protein bL12 of Parabacteroides distasonis (strain ATCC 8503 / DSM 20701 / CIP 104284 / JCM 5825 / NCTC 11152).